The sequence spans 397 residues: 3-hydroxy-3-methylglutaryl-coenzyme A reductase (397 aa).

Active-site charge relay system residues include glutamate 96 and aspartate 301. Residue histidine 391 is the Proton donor of the active site.

This sequence belongs to the HMG-CoA reductase family.

It carries out the reaction (R)-mevalonate + 2 NADP(+) + CoA = (3S)-3-hydroxy-3-methylglutaryl-CoA + 2 NADPH + 2 H(+). The protein operates within metabolic intermediate biosynthesis; (R)-mevalonate biosynthesis; (R)-mevalonate from acetyl-CoA: step 3/3. Converts HMG-CoA to mevalonate. This Methanothermobacter thermautotrophicus (strain ATCC 29096 / DSM 1053 / JCM 10044 / NBRC 100330 / Delta H) (Methanobacterium thermoautotrophicum) protein is 3-hydroxy-3-methylglutaryl-coenzyme A reductase (hmgA).